The sequence spans 238 residues: uncharacterized protein (238 aa).

4 helical membrane passes run 16 to 36 (HLII…IGLE), 44 to 64 (VGVK…IVSI), 81 to 101 (PMRL…GVIL), and 123 to 143 (IGIA…VMIL).

This sequence belongs to the MgtC/SapB family.

Its subcellular location is the cell inner membrane. This is an uncharacterized protein from Haemophilus influenzae (strain ATCC 51907 / DSM 11121 / KW20 / Rd).